A 683-amino-acid chain; its full sequence is Elongation factor G 2 (683 aa).

Residues 4–279 (QQMRNIGIMA…AVVEYLPAPQ (276 aa)) form the tr-type G domain. Residues 13–20 (AHVDAGKT), 77–81 (DTPGH), and 131–134 (NKMD) contribute to the GTP site.

The protein belongs to the TRAFAC class translation factor GTPase superfamily. Classic translation factor GTPase family. EF-G/EF-2 subfamily.

It localises to the cytoplasm. Functionally, catalyzes the GTP-dependent ribosomal translocation step during translation elongation. During this step, the ribosome changes from the pre-translocational (PRE) to the post-translocational (POST) state as the newly formed A-site-bound peptidyl-tRNA and P-site-bound deacylated tRNA move to the P and E sites, respectively. Catalyzes the coordinated movement of the two tRNA molecules, the mRNA and conformational changes in the ribosome. The sequence is that of Elongation factor G 2 (fusB) from Treponema pallidum (strain Nichols).